A 48-amino-acid polypeptide reads, in one-letter code: Delta-ctenitoxin-Pn1b (48 aa).

5 disulfide bridges follow: Cys1/Cys15, Cys8/Cys21, Cys12/Cys48, Cys14/Cys31, and Cys23/Cys29.

This sequence belongs to the neurotoxin 03 (Tx2) family. 05 subfamily. As to expression, expressed by the venom gland.

It is found in the secreted. Functionally, insecticidal neurotoxin that reversibly inhibits the N-methyl-D-aspartate (NMDA)-subtype of ionotropic glutamate receptor (GRIN) and inhibits inactivation of insect sodium channels (Nav). Inhibits glutamate uptake in rat brain synaptosomes. In vivo, induces immediate excitatory effects when injected intrathoracically in houseflies and cockroaches. The protein is Delta-ctenitoxin-Pn1b of Phoneutria nigriventer (Brazilian armed spider).